Reading from the N-terminus, the 546-residue chain is Sterol O-acyltransferase 1 (546 aa).

The residue at position 1 (methionine 1) is an N-acetylmethionine. Residues 1–37 form a disordered region; that stretch reads MVGEEKMSLRNRLSKSGENPEQDEAQRSVSDTQSNGR. Over 1-134 the chain is Cytoplasmic; the sequence is MVGEEKMSLR…LDELFEVDHI (134 aa). Phosphoserine is present on serine 8. Polar residues predominate over residues 27–37; the sequence is RSVSDTQSNGR. Position 133 (histidine 133) interacts with cholesterol. A helical membrane pass occupies residues 135–156; that stretch reads RTIYHMFIGLLILFILSTLVVD. Over 157–176 the chain is Lumenal; that stretch reads YIDEGRLVLEFNLLGYAFGK. A helical transmembrane segment spans residues 177–202; it reads LPTVIWTWWAMFLSTLSIPYFLFQRW. The Cytoplasmic segment spans residues 203 to 214; the sequence is AHGYSKTSHPLI. The helical transmembrane segment at 215–240 threads the bilayer; the sequence is YSLSHGFFFLVFQLGILGFVPTYVVL. At 241-248 the chain is on the lumenal side; it reads AYTLPPAS. A helical membrane pass occupies residues 249-272; that stretch reads RFIVILEQIRMVMKAHSFVRENVP. At 273–315 the chain is on the cytoplasmic side; that stretch reads RVLNAAKEKSSTVPVPTVNQYLYFLFAPTLIYRDSYPRTPTVR. The helical transmembrane segment at 316 to 348 threads the bilayer; sequence WGYVAVQFLQVFGCLFYVYYIFERLCAPLFRNI. Topologically, residues 349–365 are lumenal; that stretch reads KQEPFSARVLVLCVFNS. Residues 366–391 form a helical membrane-spanning segment; the sequence is ILPGVLMLFLTFFAFLHCWLNAFAEM. Topologically, residues 392–439 are cytoplasmic; sequence LRFGDRMFYKDWWNSTSYSNYYRTWNVVVHDWLYYYAYKDLLWFFSKR. Residues 399–405 carry the FYXDWWN motif motif; the sequence is FYKDWWN. 7 residues coordinate an acyl-CoA: asparagine 411, arginine 414, asparagine 417, histidine 421, tyrosine 429, lysine 441, and serine 452. Residues 440 to 464 form a helical membrane-spanning segment; that stretch reads FKSAAMLAVFALSAVVHEYALAVCL. Histidine 456 is an active-site residue. The Lumenal segment spans residues 465–470; the sequence is SYFYPV. Residues 471–486 form a helical membrane-spanning segment; the sequence is LFVLFMFFGMAFNFIV. Over 487 to 492 the chain is Cytoplasmic; the sequence is NDSRKR. The helical transmembrane segment at 493–524 threads the bilayer; it reads PIWNIMVWASLFLGHGVILCFYSQEWYARQHC. The cysteines at positions 524 and 542 are disulfide-linked. The Lumenal segment spans residues 525–546; it reads PLKNPTFLDYVRPRSWTCQYVF.

Belongs to the membrane-bound acyltransferase family. Sterol o-acyltransferase subfamily. May form homo- or heterodimers. Interacts with UBIAD1.

Its subcellular location is the endoplasmic reticulum membrane. The enzyme catalyses a sterol + a long-chain fatty acyl-CoA = a long-chain 3-hydroxysterol ester + CoA. The catalysed reaction is cholesterol + an acyl-CoA = a cholesterol ester + CoA. It catalyses the reaction cholesterol + (9Z)-octadecenoyl-CoA = cholesteryl (9Z-octadecenoate) + CoA. It carries out the reaction cholesterol + hexadecanoyl-CoA = cholesteryl hexadecanoate + CoA. The enzyme catalyses octadecanoyl-CoA + cholesterol = cholesteryl octadecanoate + CoA. The catalysed reaction is (9Z,12Z)-octadecadienoyl-CoA + cholesterol = cholesteryl (9Z,12Z)-octadecadienoate + CoA. It catalyses the reaction (5Z,8Z,11Z,14Z)-eicosatetraenoyl-CoA + cholesterol = cholesteryl (5Z,8Z,11Z,14Z)-eicosatetraenoate + CoA. It carries out the reaction (9Z)-hexadecenoyl-CoA + cholesterol = cholesteryl (9Z)-hexadecenoate + CoA. The enzyme catalyses (11Z)-octadecenoyl-CoA + cholesterol = cholesteryl (11Z)-octadecenoate + CoA. The catalysed reaction is (7Z)-octadecenoyl-CoA + cholesterol = cholesteryl (7Z)-octadecenoate + CoA. Its function is as follows. Catalyzes the formation of fatty acid-cholesterol esters, which are less soluble in membranes than cholesterol. Plays a role in lipoprotein assembly and dietary cholesterol absorption. Preferentially utilizes oleoyl-CoA ((9Z)-octadecenoyl-CoA) as a substrate: shows a higher activity towards an acyl-CoA substrate with a double bond at the delta-9 position (9Z) than towards saturated acyl-CoA or an unsaturated acyl-CoA with a double bond at the delta-7 (7Z) or delta-11 (11Z) positions. This chain is Sterol O-acyltransferase 1 (SOAT1), found in Cricetulus griseus (Chinese hamster).